A 366-amino-acid chain; its full sequence is Dof zinc finger protein DOF1.3 (366 aa).

Residues 22–103 (DPYSSSSHVL…KTTELKKPDK (82 aa)) are disordered. 2 stretches are compositionally biased toward low complexity: residues 25–45 (SSSS…SLSL) and 56–69 (TDNT…NLNN). 2 stretches are compositionally biased toward basic and acidic residues: residues 70 to 83 (ESKE…DQHS) and 91 to 103 (EEEK…KPDK). The Dof-type zinc finger occupies 105-159 (LPCPRCNSADTKFCYYNNYNVNQPRHFCRKCQRYWTAGGSMRIVPVGSGRRKNKG). Zn(2+) is bound by residues Cys107, Cys110, Cys132, and Cys135.

Its subcellular location is the nucleus. Transcription factor that binds specifically to a 5'-AA[AG]G-3' consensus core sequence. The polypeptide is Dof zinc finger protein DOF1.3 (DOF1.3) (Arabidopsis thaliana (Mouse-ear cress)).